The sequence spans 191 residues: RNA pyrophosphohydrolase (191 aa).

In terms of domain architecture, Nudix hydrolase spans 6 to 149 (GYRLNVGIIL…KREVYRQALS (144 aa)). The Nudix box motif lies at 38–59 (GGIKVDEDPDAAMFRELYEEVG). The segment at 162-191 (GAQAVSDAGGTATRQIPVATEPSGPSSSQR) is disordered.

It belongs to the Nudix hydrolase family. RppH subfamily. A divalent metal cation is required as a cofactor.

Functionally, accelerates the degradation of transcripts by removing pyrophosphate from the 5'-end of triphosphorylated RNA, leading to a more labile monophosphorylated state that can stimulate subsequent ribonuclease cleavage. The polypeptide is RNA pyrophosphohydrolase (Methylococcus capsulatus (strain ATCC 33009 / NCIMB 11132 / Bath)).